Consider the following 529-residue polypeptide: MSKQQKKEVEQRRCFGIISHPDAGKTTLTEKFLLFGGAIQLAGAVKARKAARHATSDWMSIERDRGISVTTSVMTFSYRDFFINLLDTPGHQDFSEDTYRVLTAVDSALMVIDSAKGVEAQTEKLMEVCRMRNTPIITFINKMDRDGMAPLDLLSDIEEKLQIECAPLTWPIGAGKGFAGVYNLYKKELQLFTAGGKTRQKDGIVIQDLDDPKLAELIGESKAEELREDIELLEGAANPFEMEHYLSGSQTPVFFGSAINNFGITELLDALVEMAPAPGLRPAESRDVSPLEEDFSGFTFKIQANMDPAHRDRIAFVRICSGKFNRGMKVMHHRIGKEMIISNATMFMAQDRANVEEAWPGDIIGVHNHGTIKIGDTFTIKEPLKFTGIPNFAPEHFRRVMLKDPMKAKQLNKGLTQLAEEGAVQVFRPLTSADNILGAVGVLQFDVTMARLKAEYNVDCIYEAIDYNTARWVECPDNKMLDEFRKANQANLALDGEGQLAYLAPSQWRLGFVQENWPDVVFHKTREYN.

Positions Glu10–Gly279 constitute a tr-type G domain. GTP contacts are provided by residues Ser19 to Thr26, Asp87 to His91, and Asn141 to Asp144.

Belongs to the TRAFAC class translation factor GTPase superfamily. Classic translation factor GTPase family. PrfC subfamily.

It is found in the cytoplasm. Increases the formation of ribosomal termination complexes and stimulates activities of RF-1 and RF-2. It binds guanine nucleotides and has strong preference for UGA stop codons. It may interact directly with the ribosome. The stimulation of RF-1 and RF-2 is significantly reduced by GTP and GDP, but not by GMP. This chain is Peptide chain release factor 3, found in Desulfatibacillum aliphaticivorans.